Consider the following 182-residue polypeptide: Protein SrpB (182 aa).

4 helical membrane passes run Trp-11 to Asn-31, Thr-43 to Gly-63, Leu-73 to Leu-93, and Ile-116 to Ile-136.

This sequence belongs to the MgtC/SapB family.

Its subcellular location is the cell membrane. The polypeptide is Protein SrpB (srpB) (Synechococcus elongatus (strain ATCC 33912 / PCC 7942 / FACHB-805) (Anacystis nidulans R2)).